Reading from the N-terminus, the 262-residue chain is ATP synthase subunit a (262 aa).

7 consecutive transmembrane segments (helical) span residues 30-50, 64-84, 91-111, 123-143, 149-169, 195-215, and 220-240; these read ITSLTNIAILFIIGLLVLTIF, WNIVLETWVASILGIVKDQIG, LIYFPLIFTFFSFVFISNILG, ISVTLGLSIAIMIGVTLIGFS, FFSLFVPKGTPLALVPLLVLI, LFGVISALSVSACIAVSSLLL, and ITLPLAVLVVLYGLELLVALL.

It belongs to the ATPase A chain family. As to quaternary structure, F-type ATPases have 2 components, CF(1) - the catalytic core - and CF(0) - the membrane proton channel. CF(1) has five subunits: alpha(3), beta(3), gamma(1), delta(1), epsilon(1). CF(0) has three main subunits: a, b and c.

It is found in the mitochondrion inner membrane. In terms of biological role, mitochondrial membrane ATP synthase (F(1)F(0) ATP synthase or Complex V) produces ATP from ADP in the presence of a proton gradient across the membrane which is generated by electron transport complexes of the respiratory chain. F-type ATPases consist of two structural domains, F(1) - containing the extramembraneous catalytic core and F(0) - containing the membrane proton channel, linked together by a central stalk and a peripheral stalk. During catalysis, ATP synthesis in the catalytic domain of F(1) is coupled via a rotary mechanism of the central stalk subunits to proton translocation. Key component of the proton channel; it may play a direct role in the translocation of protons across the membrane. In Allomyces macrogynus, this protein is ATP synthase subunit a (ATP6).